The chain runs to 172 residues: Translation initiation factor IF-3 (172 aa).

The protein belongs to the IF-3 family. As to quaternary structure, monomer.

The protein localises to the cytoplasm. IF-3 binds to the 30S ribosomal subunit and shifts the equilibrium between 70S ribosomes and their 50S and 30S subunits in favor of the free subunits, thus enhancing the availability of 30S subunits on which protein synthesis initiation begins. This is Translation initiation factor IF-3 from Bartonella quintana (strain Toulouse) (Rochalimaea quintana).